We begin with the raw amino-acid sequence, 426 residues long: Glutamate-1-semialdehyde 2,1-aminomutase (426 aa).

Lys265 is subject to N6-(pyridoxal phosphate)lysine.

This sequence belongs to the class-III pyridoxal-phosphate-dependent aminotransferase family. HemL subfamily. As to quaternary structure, homodimer. It depends on pyridoxal 5'-phosphate as a cofactor.

The protein resides in the cytoplasm. The catalysed reaction is (S)-4-amino-5-oxopentanoate = 5-aminolevulinate. The protein operates within porphyrin-containing compound metabolism; protoporphyrin-IX biosynthesis; 5-aminolevulinate from L-glutamyl-tRNA(Glu): step 2/2. The sequence is that of Glutamate-1-semialdehyde 2,1-aminomutase from Shigella boydii serotype 4 (strain Sb227).